We begin with the raw amino-acid sequence, 656 residues long: Exoribonuclease 2 (656 aa).

The RNB domain maps to 190–518 (RSDLTKTPFF…LNHRLIKSVL (329 aa)). The region spanning 564–649 (KWRYKAEIFD…ESGQLIGKLA (86 aa)) is the S1 motif domain.

It belongs to the RNR ribonuclease family. RNase II subfamily.

Its subcellular location is the cytoplasm. It carries out the reaction Exonucleolytic cleavage in the 3'- to 5'-direction to yield nucleoside 5'-phosphates.. Its function is as follows. Involved in mRNA degradation. Hydrolyzes single-stranded polyribonucleotides processively in the 3' to 5' direction. The chain is Exoribonuclease 2 from Psychromonas ingrahamii (strain DSM 17664 / CCUG 51855 / 37).